A 391-amino-acid polypeptide reads, in one-letter code: Putative ABC transporter glucose-binding protein TsgA13 (391 aa).

An N-terminal signal peptide occupies residues 1–28 (MLDEESSIQRRDVLSALGAAGVTTLAGC). The tract at residues 24 to 71 (TLAGCTGGDTGDTDDTEASETTASEGTTSGTTTGDVETTDGGGPSEGE) is disordered. Residues 42-59 (SETTASEGTTSGTTTGDV) are compositionally biased toward low complexity.

The protein belongs to the BMP lipoprotein family. The complex is composed of two ATP-binding proteins (TsgD13), two transmembrane proteins (TsgB13 and TsgC13) and a solute-binding protein (TsgA13).

Its function is as follows. Part of an ABC transporter complex involved in glucose import. The protein is Putative ABC transporter glucose-binding protein TsgA13 (tsgA13) of Haloferax volcanii (strain ATCC 29605 / DSM 3757 / JCM 8879 / NBRC 14742 / NCIMB 2012 / VKM B-1768 / DS2) (Halobacterium volcanii).